Here is a 116-residue protein sequence, read N- to C-terminus: Prefoldin subunit beta (116 aa).

The protein belongs to the prefoldin subunit beta family. In terms of assembly, heterohexamer of two alpha and four beta subunits.

The protein resides in the cytoplasm. In terms of biological role, molecular chaperone capable of stabilizing a range of proteins. Seems to fulfill an ATP-independent, HSP70-like function in archaeal de novo protein folding. In Archaeoglobus fulgidus (strain ATCC 49558 / DSM 4304 / JCM 9628 / NBRC 100126 / VC-16), this protein is Prefoldin subunit beta (pfdB).